We begin with the raw amino-acid sequence, 281 residues long: Pantothenate synthetase (281 aa).

Position 30-37 (30-37 (MGYLHEGH)) interacts with ATP. The Proton donor role is filled by H37. Q61 is a (R)-pantoate binding site. Residue Q61 coordinates beta-alanine. An ATP-binding site is contributed by 147–150 (GEKD). (R)-pantoate is bound at residue Q153. ATP-binding positions include I176 and 184-187 (KSSR).

Belongs to the pantothenate synthetase family. In terms of assembly, homodimer.

Its subcellular location is the cytoplasm. The enzyme catalyses (R)-pantoate + beta-alanine + ATP = (R)-pantothenate + AMP + diphosphate + H(+). It functions in the pathway cofactor biosynthesis; (R)-pantothenate biosynthesis; (R)-pantothenate from (R)-pantoate and beta-alanine: step 1/1. Its function is as follows. Catalyzes the condensation of pantoate with beta-alanine in an ATP-dependent reaction via a pantoyl-adenylate intermediate. The protein is Pantothenate synthetase of Clostridium botulinum (strain Langeland / NCTC 10281 / Type F).